The sequence spans 137 residues: SPbeta prophage-derived uncharacterized protein YoqU (137 aa).

In Bacillus subtilis (strain 168), this protein is SPbeta prophage-derived uncharacterized protein YoqU (yoqU).